The chain runs to 287 residues: 4-hydroxybenzoate octaprenyltransferase (287 aa).

6 helical membrane passes run 41–61 (VSLL…GCAI), 92–112 (VALA…LNAL), 133–153 (FFAI…PMAF), 160–180 (VPLL…AYDT), 197–217 (TSAL…YAVT), and 267–287 (NNWL…AQAF).

Belongs to the UbiA prenyltransferase family. It depends on Mg(2+) as a cofactor.

Its subcellular location is the cell inner membrane. The catalysed reaction is all-trans-octaprenyl diphosphate + 4-hydroxybenzoate = 4-hydroxy-3-(all-trans-octaprenyl)benzoate + diphosphate. It functions in the pathway cofactor biosynthesis; ubiquinone biosynthesis. Functionally, catalyzes the prenylation of para-hydroxybenzoate (PHB) with an all-trans polyprenyl group. Mediates the second step in the final reaction sequence of ubiquinone-8 (UQ-8) biosynthesis, which is the condensation of the polyisoprenoid side chain with PHB, generating the first membrane-bound Q intermediate 3-octaprenyl-4-hydroxybenzoate. The polypeptide is 4-hydroxybenzoate octaprenyltransferase (Paraburkholderia phymatum (strain DSM 17167 / CIP 108236 / LMG 21445 / STM815) (Burkholderia phymatum)).